A 418-amino-acid chain; its full sequence is UDP-N-acetylglucosamine 1-carboxyvinyltransferase (418 aa).

23–24 lines the phosphoenolpyruvate pocket; that stretch reads KN. Residue Arg-93 coordinates UDP-N-acetyl-alpha-D-glucosamine. Asp-117 functions as the Proton donor in the catalytic mechanism. UDP-N-acetyl-alpha-D-glucosamine-binding residues include Asp-305 and Ile-327.

Belongs to the EPSP synthase family. MurA subfamily.

The protein localises to the cytoplasm. The enzyme catalyses phosphoenolpyruvate + UDP-N-acetyl-alpha-D-glucosamine = UDP-N-acetyl-3-O-(1-carboxyvinyl)-alpha-D-glucosamine + phosphate. It participates in cell wall biogenesis; peptidoglycan biosynthesis. Its function is as follows. Cell wall formation. Adds enolpyruvyl to UDP-N-acetylglucosamine. The polypeptide is UDP-N-acetylglucosamine 1-carboxyvinyltransferase (Corynebacterium jeikeium (strain K411)).